Reading from the N-terminus, the 434-residue chain is Probable exopolygalacturonase X (434 aa).

The N-terminal stretch at 1 to 23 (MKFLHTVAQTATLLLSLGASVEG) is a signal peptide. Residues 35 to 54 (HHPFRPLPASTPRTKTCHVR) are disordered. N-linked (GlcNAc...) asparagine glycans are attached at residues N113, N129, and N199. Residues 231-252 (SSNIVIQNSVVNNGDDCVSFKP) form a PbH1 1 repeat. D245 serves as the catalytic Proton donor. An intrachain disulfide couples C247 to C264. N-linked (GlcNAc...) asparagine glycosylation is found at N253 and N265. One copy of the PbH1 2 repeat lies at 254–274 (STDILVQNMHCNGSHGISVGS). Residue H268 is part of the active site. N-linked (GlcNAc...) asparagine glycans are attached at residues N292, N297, N329, N354, and N364. The PbH1 3 repeat unit spans residues 327–348 (VSNITYDRMYIENVDWAIEVTQ). A PbH1 4 repeat occupies 362–394 (PSNLTISDVHIKNMWGTTSGKRDPNVGTIVCSS). C392 and C398 are joined by a disulfide. N-linked (GlcNAc...) asparagine glycosylation is found at N407 and N430.

It belongs to the glycosyl hydrolase 28 family.

Its subcellular location is the secreted. The catalysed reaction is [(1-&gt;4)-alpha-D-galacturonosyl](n) + H2O = alpha-D-galacturonate + [(1-&gt;4)-alpha-D-galacturonosyl](n-1). Its function is as follows. Specific in hydrolyzing the terminal glycosidic bond of polygalacturonic acid and oligogalacturonates. The polypeptide is Probable exopolygalacturonase X (pgaX) (Aspergillus terreus (strain NIH 2624 / FGSC A1156)).